The following is an 882-amino-acid chain: Liprin-beta-2 (882 aa).

Residues 101–303 (AASNETYQER…DKDRRIEELT (203 aa)) adopt a coiled-coil conformation. Phosphoserine is present on residues S328, S362, and S386. The interval 339–554 (RKWNTTNKSP…SRTRDTKGQK (216 aa)) is disordered. Residues 388–399 (EDLRRESGDKCV) are compositionally biased toward basic and acidic residues. 2 stretches are compositionally biased toward polar residues: residues 442-457 (PTASLQPDSSGSSQPK) and 481-495 (SSASSGTESSPQSPV). 2 positions are modified to phosphoserine: S502 and S518. A compositionally biased stretch (basic residues) spans 502-515 (SPKGIKKFWGKIRR). 3 consecutive SAM domains span residues 564–628 (WSTE…INAK), 636–699 (LDHI…LHVN), and 724–789 (WSNH…KFNA).

Belongs to the liprin family. Liprin-beta subfamily. As to quaternary structure, forms homodimers and heterodimers. In terms of tissue distribution, expressed widely. Strong expression in liver, kidney, intestine, heart, lung and testis. Low expression in brain and thymus.

Functionally, may regulate the disassembly of focal adhesions. Did not bind receptor-like tyrosine phosphatases type 2A. The protein is Liprin-beta-2 (Ppfibp2) of Mus musculus (Mouse).